Reading from the N-terminus, the 181-residue chain is uncharacterized protein (181 aa).

This is an uncharacterized protein from Sinorhizobium fredii (strain NBRC 101917 / NGR234).